A 609-amino-acid chain; its full sequence is Glutamine--fructose-6-phosphate aminotransferase [isomerizing] (609 aa).

Cys-2 acts as the Nucleophile; for GATase activity in catalysis. Residues 2–218 (CGIVGAIAQR…EGDIAEITRR (217 aa)) enclose the Glutamine amidotransferase type-2 domain. 2 SIS domains span residues 286–426 (ADEL…LKGL) and 458–599 (LAED…VDQP). Lys-604 serves as the catalytic For Fru-6P isomerization activity.

Homodimer.

It is found in the cytoplasm. The catalysed reaction is D-fructose 6-phosphate + L-glutamine = D-glucosamine 6-phosphate + L-glutamate. Catalyzes the first step in hexosamine metabolism, converting fructose-6P into glucosamine-6P using glutamine as a nitrogen source. The protein is Glutamine--fructose-6-phosphate aminotransferase [isomerizing] of Escherichia coli O6:H1 (strain CFT073 / ATCC 700928 / UPEC).